Consider the following 115-residue polypeptide: Divalent-cation tolerance protein CutA (115 aa).

Residues Cys-19, His-86, and His-87 each contribute to the Cu cation site.

The protein belongs to the CutA family. Homotrimer. The cofactor is Cu cation.

It localises to the cytoplasm. Its function is as follows. Involved in resistance toward heavy metals. The polypeptide is Divalent-cation tolerance protein CutA (Salmonella agona (strain SL483)).